Reading from the N-terminus, the 341-residue chain is MIINIVEILIFLVCVLFSVAYLTVAERKTLAYMQRRLGPNFVGYYGLLQAFADAVKLLLKEIVLPKESNYIILVISPLITLITALIGWVVIPLGPGITLGELNLGILFSLAIGSLGVFGSLLSGWSSNSKYSLLGSIRSTAQLISYELILTSIFIIIIMFVSSLNITTIIETQRVVWYCIPLLPLLLIFFIASVAETARPPFDLTESESELVAGYFTEYSGSPFVFFFLAEYSNIILISAFNGYLLLGGYLSFNYSYLFNILFNDYSYVSFLFEGLINSSAYAIKLVFLMFSFIWVRAAFPRFTYDNLINFCWIILLPLLFGIFLIIPSTLYIFDSFPTLI.

A run of 10 helical transmembrane segments spans residues 2-22 (IINIVEILIFLVCVLFSVAYL), 39-59 (PNFVGYYGLLQAFADAVKLLL), 71-91 (IILVISPLITLITALIGWVVI), 104-124 (LGILFSLAIGSLGVFGSLLSG), 141-161 (AQLISYELILTSIFIIIIMFV), 175-195 (VVWYCIPLLPLLLIFFIASVA), 212-230 (VAGYFTEYSGSPFVFFFLA), 243-263 (GYLLLGGYLSFNYSYLFNILF), 276-296 (LINSSAYAIKLVFLMFSFIWV), and 308-328 (LINFCWIILLPLLFGIFLIIP).

Belongs to the complex I subunit 1 family. Complex I is composed of 37 different subunits.

It localises to the mitochondrion inner membrane. It carries out the reaction a ubiquinone + NADH + 5 H(+)(in) = a ubiquinol + NAD(+) + 4 H(+)(out). In terms of biological role, core subunit of the mitochondrial membrane respiratory chain NADH dehydrogenase (Complex I) that is believed to belong to the minimal assembly required for catalysis. Complex I functions in the transfer of electrons from NADH to the respiratory chain. The immediate electron acceptor for the enzyme is believed to be ubiquinone. The sequence is that of NADH-ubiquinone oxidoreductase chain 1 (ND1) from Yarrowia lipolytica (strain CLIB 122 / E 150) (Yeast).